We begin with the raw amino-acid sequence, 335 residues long: Adenosine deaminase (335 aa).

Residues H12 and H14 each contribute to the Zn(2+) site. Substrate contacts are provided by H14 and D16. Residue H197 participates in Zn(2+) binding. The Proton donor role is filled by E200. D278 contributes to the Zn(2+) binding site.

Belongs to the metallo-dependent hydrolases superfamily. Adenosine and AMP deaminases family. Adenosine deaminase subfamily. Zn(2+) is required as a cofactor.

It catalyses the reaction adenosine + H2O + H(+) = inosine + NH4(+). The catalysed reaction is 2'-deoxyadenosine + H2O + H(+) = 2'-deoxyinosine + NH4(+). Its function is as follows. Catalyzes the hydrolytic deamination of adenosine and 2-deoxyadenosine. This chain is Adenosine deaminase, found in Clostridium botulinum (strain Okra / Type B1).